Reading from the N-terminus, the 104-residue chain is MAIQGIEGVISQLQATAMTARNTSVADTQPEISFAGQLHAALDRISDTQNAARTQAEKFTLGEPGVALNDVMTDLQKSSVSLQMGIQVRNKLVTAYQEMMSMQV.

The protein belongs to the FliE family.

The protein resides in the bacterial flagellum basal body. The chain is Flagellar hook-basal body complex protein FliE from Enterobacter sp. (strain 638).